Consider the following 199-residue polypeptide: Adenine phosphoribosyltransferase (199 aa).

This sequence belongs to the purine/pyrimidine phosphoribosyltransferase family. Homodimer.

The protein localises to the cytoplasm. It catalyses the reaction AMP + diphosphate = 5-phospho-alpha-D-ribose 1-diphosphate + adenine. The protein operates within purine metabolism; AMP biosynthesis via salvage pathway; AMP from adenine: step 1/1. Functionally, catalyzes a salvage reaction resulting in the formation of AMP, that is energically less costly than de novo synthesis. The protein is Adenine phosphoribosyltransferase of Rhodopseudomonas palustris (strain BisB18).